Reading from the N-terminus, the 918-residue chain is Melanoma-associated antigen E1 (918 aa).

Disordered regions lie at residues 1–140 (MSLV…GSKA), 154–227 (EQRH…SNGL), and 367–388 (SQMS…ANNP). The span at 8–23 (SRRRRGGRANARRNNG) shows a compositional bias: basic residues. 3 stretches are compositionally biased toward polar residues: residues 70-96 (VPPT…SEMP), 113-126 (GLNT…SEGP), and 213-227 (EDPS…SNGL). MAGE domains follow at residues 459–658 (MEQN…YNEA) and 706–897 (LESK…YREA). Residues 704–918 (SRLESKARKL…RRPLIVRNLR (215 aa)) are interaction with DTNA.

As to quaternary structure, interacts with DTNA. Interacts with TRIM28. As to expression, expressed in cell bodies and dendrites of hippocampal and Purkinje neurons. Also expressed in peripheral nerve, where it localizes to the perineurium and myelin (at protein level). Predominantly expressed in brain and at low levels in the heart, liver, kidney, spleen, testis, lung, thymus, placenta and skeletal muscle.

It localises to the cytoplasm. The protein localises to the perinuclear region. Its subcellular location is the nucleus. It is found in the cell membrane. In terms of biological role, may enhance ubiquitin ligase activity of RING-type zinc finger-containing E3 ubiquitin-protein ligases. Proposed to act through recruitment and/or stabilization of the Ubl-conjugating enzyme (E2) at the E3:substrate complex. In Mus musculus (Mouse), this protein is Melanoma-associated antigen E1 (Magee1).